A 258-amino-acid chain; its full sequence is Flagellin B3 (258 aa).

The propeptide occupies 1 to 8; that stretch reads MRFLKKRG.

Belongs to the archaeal flagellin family.

It localises to the archaeal flagellum. Its function is as follows. Flagellin is the subunit protein which polymerizes to form the filaments of archaeal flagella. The chain is Flagellin B3 (flaB3) from Thermococcus kodakarensis (strain ATCC BAA-918 / JCM 12380 / KOD1) (Pyrococcus kodakaraensis (strain KOD1)).